A 170-amino-acid chain; its full sequence is MASLFASLGRSLIKLLIVLPVIIGLSISSPAMAAQWDAETLTVPAGSGGQQVTFTESEIKSASKLFKSNCATCHNQGVTKTNQNVGLDLEALSLASPARDNVDGLVEFLKNPMSYDGEYSIADTHPGISSSDVYVQMRTLNDEDLRLIAGYILTAEKVQGDQWGGGKIYF.

A signal peptide spans 1–33 (MASLFASLGRSLIKLLIVLPVIIGLSISSPAMA). 4 residues coordinate heme c: C70, C73, H74, and H125.

This sequence belongs to the cytochrome c family. PsbV subfamily. In terms of assembly, PSII is composed of 1 copy each of membrane proteins PsbA, PsbB, PsbC, PsbD, PsbE, PsbF, PsbH, PsbI, PsbJ, PsbK, PsbL, PsbM, PsbT, PsbX, PsbY, Psb30/Ycf12, peripheral proteins PsbO, CyanoQ (PsbQ), PsbU, PsbV and a large number of cofactors. It forms dimeric complexes. The cofactor is heme c.

The protein resides in the cellular thylakoid membrane. In terms of biological role, one of the extrinsic, lumenal subunits of photosystem II (PSII). PSII is a light-driven water plastoquinone oxidoreductase, using light energy to abstract electrons from H(2)O, generating a proton gradient subsequently used for ATP formation. The extrinsic proteins stabilize the structure of photosystem II oxygen-evolving complex (OEC), the ion environment of oxygen evolution and protect the OEC against heat-induced inactivation. Low-potential cytochrome c that plays a role in the OEC of PSII. The polypeptide is Photosystem II extrinsic protein V (Prochlorococcus marinus (strain MIT 9313)).